The sequence spans 464 residues: UPF0210 protein Cgl1545/cg1743 (464 aa).

This sequence belongs to the UPF0210 family. In terms of assembly, homodimer.

This chain is UPF0210 protein Cgl1545/cg1743, found in Corynebacterium glutamicum (strain ATCC 13032 / DSM 20300 / JCM 1318 / BCRC 11384 / CCUG 27702 / LMG 3730 / NBRC 12168 / NCIMB 10025 / NRRL B-2784 / 534).